Reading from the N-terminus, the 337-residue chain is 4-hydroxy-3-methylbut-2-enyl diphosphate reductase (337 aa).

Cys38 lines the [4Fe-4S] cluster pocket. (2E)-4-hydroxy-3-methylbut-2-enyl diphosphate contacts are provided by His67 and His100. Positions 67 and 100 each coordinate dimethylallyl diphosphate. The isopentenyl diphosphate site is built by His67 and His100. Cys122 contributes to the [4Fe-4S] cluster binding site. His150 provides a ligand contact to (2E)-4-hydroxy-3-methylbut-2-enyl diphosphate. His150 contacts dimethylallyl diphosphate. His150 provides a ligand contact to isopentenyl diphosphate. Glu152 functions as the Proton donor in the catalytic mechanism. (2E)-4-hydroxy-3-methylbut-2-enyl diphosphate is bound at residue Thr190. Cys220 is a [4Fe-4S] cluster binding site. 4 residues coordinate (2E)-4-hydroxy-3-methylbut-2-enyl diphosphate: Ser248, Ser249, Asn250, and Ser293. Residues Ser248, Ser249, Asn250, and Ser293 each coordinate dimethylallyl diphosphate. 4 residues coordinate isopentenyl diphosphate: Ser248, Ser249, Asn250, and Ser293.

The protein belongs to the IspH family. [4Fe-4S] cluster serves as cofactor.

It carries out the reaction isopentenyl diphosphate + 2 oxidized [2Fe-2S]-[ferredoxin] + H2O = (2E)-4-hydroxy-3-methylbut-2-enyl diphosphate + 2 reduced [2Fe-2S]-[ferredoxin] + 2 H(+). It catalyses the reaction dimethylallyl diphosphate + 2 oxidized [2Fe-2S]-[ferredoxin] + H2O = (2E)-4-hydroxy-3-methylbut-2-enyl diphosphate + 2 reduced [2Fe-2S]-[ferredoxin] + 2 H(+). Its pathway is isoprenoid biosynthesis; dimethylallyl diphosphate biosynthesis; dimethylallyl diphosphate from (2E)-4-hydroxy-3-methylbutenyl diphosphate: step 1/1. The protein operates within isoprenoid biosynthesis; isopentenyl diphosphate biosynthesis via DXP pathway; isopentenyl diphosphate from 1-deoxy-D-xylulose 5-phosphate: step 6/6. Catalyzes the conversion of 1-hydroxy-2-methyl-2-(E)-butenyl 4-diphosphate (HMBPP) into a mixture of isopentenyl diphosphate (IPP) and dimethylallyl diphosphate (DMAPP). Acts in the terminal step of the DOXP/MEP pathway for isoprenoid precursor biosynthesis. In Mycolicibacterium vanbaalenii (strain DSM 7251 / JCM 13017 / BCRC 16820 / KCTC 9966 / NRRL B-24157 / PYR-1) (Mycobacterium vanbaalenii), this protein is 4-hydroxy-3-methylbut-2-enyl diphosphate reductase.